The sequence spans 337 residues: Oxidoreductase andH (337 aa).

Belongs to the NmrA-type oxidoreductase family.

Its pathway is secondary metabolite biosynthesis; terpenoid biosynthesis. In terms of biological role, oxidoreductase; part of the gene cluster that mediates the biosynthesis of anditomin, a fungal meroterpenoid. The first step of the pathway is the synthesis of 3,5-dimethylorsellinic acid (DMOA) by the polyketide synthase andM. DMOA is then converted to the phthalide compound 5,7-dihydroxy-4,6-dimethylphthalide (DHDMP) by the cytochrome P450 monooxygenase andK, which is further prenylated by the prenyltransferase andD to yield farnesyl-DHDMP. Further epoxidation by the FAD-dependent monooxygenase andE leads to epoxyfarnesyl-DHDMP. The next step involves the terpene cyclase andB that converts epoxyfarnesyl-DHDMP into preandiloid A through opening of the epoxide ring followed by the cyclization of the farnesyl moiety. Preandiloid A is in turn oxidized at the C-3 hydroxyl group to yield preandiloid B by the dehydrogenase andC. The dioxygenase andA is solely responsible for the dehydrogenation of preandiloid B leading to the enone preandiloid C, as well as for the intriguing structural rearrangement to generate the bicyclo[2.2.2]octane core, transforming preandiloid C into andiconin. FAD-binding monooxygenase andJ then produces andilesin D which is reduced by dehydrogenase andI to yield andilesin A. Action of acetyltransferase andG followed by a spontaneous acetate elimination leads then to andilesin B, which is in turn substrate of the short chain dehydrogenase andH to yield andilesin C. Finally, the dioxygenase andF catalyzes the transformation of andilesin C to anditomin. The polypeptide is Oxidoreductase andH (Emericella variicolor (Aspergillus stellatus)).